Reading from the N-terminus, the 71-residue chain is Large ribosomal subunit protein bL32c (71 aa).

The segment at 1 to 24 is disordered; the sequence is MAVPKKRTSRSKKKIRKNVRKGKK.

It belongs to the bacterial ribosomal protein bL32 family.

The protein resides in the plastid. It localises to the chloroplast. In Pinus koraiensis (Korean pine), this protein is Large ribosomal subunit protein bL32c.